The following is a 543-amino-acid chain: Putative pectinesterase/pectinesterase inhibitor 22 (543 aa).

A signal peptide spans 1–19 (MGITTALLLVMLMSVHTSS). Positions 38 to 197 (AKACQFIDAH…TQLVSNVLDM (160 aa)) are pectinesterase inhibitor 22. Residues N211 and N263 are each glycosylated (N-linked (GlcNAc...) asparagine). The segment at 240–527 (NTVVAIDGKG…FTVGSFIDGR (288 aa)) is pectinesterase 22. 2 residues coordinate substrate: T315 and Q345. Residue D368 is the Proton donor; for pectinesterase activity of the active site. C382 and C402 are joined by a disulfide. The active-site Nucleophile; for pectinesterase activity is D389. Substrate-binding residues include R448 and W450.

The protein in the N-terminal section; belongs to the PMEI family. This sequence in the C-terminal section; belongs to the pectinesterase family.

The protein localises to the secreted. Its subcellular location is the cell wall. The catalysed reaction is [(1-&gt;4)-alpha-D-galacturonosyl methyl ester](n) + n H2O = [(1-&gt;4)-alpha-D-galacturonosyl](n) + n methanol + n H(+). The protein operates within glycan metabolism; pectin degradation; 2-dehydro-3-deoxy-D-gluconate from pectin: step 1/5. In terms of biological role, acts in the modification of cell walls via demethylesterification of cell wall pectin. The polypeptide is Putative pectinesterase/pectinesterase inhibitor 22 (PME22) (Arabidopsis thaliana (Mouse-ear cress)).